Here is a 1189-residue protein sequence, read N- to C-terminus: Pesticidal crystal protein Cry1Ca (1189 aa).

The protein belongs to the delta endotoxin family.

Functionally, promotes colloidosmotic lysis by binding to the midgut epithelial cells of many lepidopteran larvae including Spodoptera species. The sequence is that of Pesticidal crystal protein Cry1Ca (cry1Ca) from Bacillus thuringiensis subsp. entomocidus.